The sequence spans 458 residues: Hyaluronidase conohyal-P1 (458 aa).

The first 18 residues, 1-18 (MRVVVVVTGLVVVVVATA), serve as a signal peptide directing secretion. Positions 24-47 (HDVKSASSPLSSSSVYQGSSGDDC) are disordered. Low complexity predominate over residues 28 to 43 (SASSPLSSSSVYQGSS). Cysteines 68 and 342 form a disulfide. N-linked (GlcNAc...) asparagine glycans are attached at residues Asn106 and Asn141. Glu151 functions as the Proton donor in the catalytic mechanism. Residues Asn261, Asn337, and Asn359 are each glycosylated (N-linked (GlcNAc...) asparagine). Residues 363-434 (VMADCSTTLC…VRPSRCHKQQ (72 aa)) enclose the EGF-like domain. 3 cysteine pairs are disulfide-bonded: Cys367–Cys378, Cys372–Cys411, and Cys413–Cys422.

The protein belongs to the glycosyl hydrolase 56 family. Expressed by the venom duct.

It localises to the secreted. The catalysed reaction is Random hydrolysis of (1-&gt;4)-linkages between N-acetyl-beta-D-glucosamine and D-glucuronate residues in hyaluronate.. Functionally, hyaluronidase catalyzes the hydrolysis of hyaluronic acid (HA), an anionic, nonsulfated glycosaminoglycan distributed widely throughout connective, epithelial, and neural tissues. In venom, they are known to enhance diffusion of the venom by degrading the extracellular matrix. This is Hyaluronidase conohyal-P1 from Conus purpurascens (Purple cone).